Here is a 193-residue protein sequence, read N- to C-terminus: MSMQASKLAKIEGLLFVTGDDGISPTEMAELVEISEDEVIQLLEVLSEQMAKEERGIRLARLANRYRLTTKVEHADMYKKLASSPIHGGLSRAALETLAIVAYKQPITRAEIDEVRGVKSEKALQSLVSKLLIEECGRASGTGRAILYGTTPYFLDHFGLESLADLPDLKELDLNEEEQDETDLFFEKLNADL.

This sequence belongs to the ScpB family. In terms of assembly, homodimer. Homodimerization may be required to stabilize the binding of ScpA to the Smc head domains. Component of a cohesin-like complex composed of ScpA, ScpB and the Smc homodimer, in which ScpA and ScpB bind to the head domain of Smc. The presence of the three proteins is required for the association of the complex with DNA.

It localises to the cytoplasm. Functionally, participates in chromosomal partition during cell division. May act via the formation of a condensin-like complex containing Smc and ScpA that pull DNA away from mid-cell into both cell halves. The polypeptide is Segregation and condensation protein B (Shouchella clausii (strain KSM-K16) (Alkalihalobacillus clausii)).